Consider the following 258-residue polypeptide: MSSSFIPKRIALVLNLAMVAIQVFFIRSVSSMNETNSYLYHKCSEAEGKYKSKSPYEGNLNFLTNDMYKDTFVRGFVYAYHGDDPNTVYILLQCRGDSYGSKCGSCLSTATSELRRRCPMNKAGIVWFDKCLLKISPTAFFEKIDDKNKFYMYSTKKVSDPALFNVKTKALLTELTAKATRRSDKLLLYETGEMKLGKMKLYGMVQCRRDLWFTVCKTCLDKIIGELPKCCDGKEGGRVLSGSCNFRYEIYPFLDTVR.

The signal sequence occupies residues 1–31; sequence MSSSFIPKRIALVLNLAMVAIQVFFIRSVSS. 2 consecutive Gnk2-homologous domains span residues 38 to 140 and 146 to 253; these read YLYH…PTAF and DKNK…IYPF.

The protein belongs to the cysteine-rich repeat secretory protein family.

It is found in the secreted. This Arabidopsis thaliana (Mouse-ear cress) protein is Putative cysteine-rich repeat secretory protein 61 (CRRSP61).